The chain runs to 122 residues: Large ribosomal subunit protein bL12 (122 aa).

This sequence belongs to the bacterial ribosomal protein bL12 family. Homodimer. Part of the ribosomal stalk of the 50S ribosomal subunit. Forms a multimeric L10(L12)X complex, where L10 forms an elongated spine to which 2 to 4 L12 dimers bind in a sequential fashion. Binds GTP-bound translation factors.

Forms part of the ribosomal stalk which helps the ribosome interact with GTP-bound translation factors. Is thus essential for accurate translation. The protein is Large ribosomal subunit protein bL12 of Stenotrophomonas maltophilia (strain K279a).